A 163-amino-acid chain; its full sequence is tRNA-acetylating toxin 2 (163 aa).

Acetyl-CoA-binding residues include Leu-89, Val-91, His-96, Gly-97, Gln-98, Gly-99, Ala-101, Arg-102, and Glu-132. Residue Tyr-137 is part of the active site. Arg-139 contacts acetyl-CoA.

It belongs to the acetyltransferase family. GNAT subfamily. In terms of assembly, homodimer (in absence of antitoxin). Forms a complex with cognate antitoxin TacA2. Forms a 4:2 antitoxin:toxin complex with cognate antitoxin TacA2.

It catalyses the reaction glycyl-tRNA(Gly) + acetyl-CoA = N-acetylglycyl-tRNA(Gly) + CoA + H(+). Functionally, toxic component of a type II toxin-antitoxin (TA) system. Acetylates tRNA and inhibits translation. Acetylates exclusively Gly in situ. Overexpression during the lag phase of a tacA2-tacT2 deletion strain leads to very small increase in persister cells in the presence of cefotaxime but no detectable growth phenotype in absence of antibiotics. Compared to a protein with a single amino acid change (TacT2 from S.enterica NCTC 13349, Glu-29 is Lys in NCTC 13349) this protein binds tRNA very poorly and acetylates tRNA very poorly. Persister cell formation is neutralized by cognate antitoxin TacA2. Neutralized only by cognate antitoxin TacA2 (A8), but not by TacA1 or TacA3. Plays a role in persister cell formation. Its function is as follows. The TacA2-TacT2 complex both represses and derepresses expression of its own operon. The sequence is that of tRNA-acetylating toxin 2 from Salmonella typhimurium (strain 14028s / SGSC 2262).